Consider the following 726-residue polypeptide: Methionine--tRNA ligase (726 aa).

A 'HIGH' region motif is present at residues 12–22; it reads PYVNNIPHLGN. Residues Cys143, Cys146, Cys155, and Cys158 each coordinate Zn(2+). Residues 330–334 carry the 'KMSKS' region motif; that stretch reads KFSKS. Residue Lys333 coordinates ATP. One can recognise a tRNA-binding domain in the interval 562 to 667; it reads FSEQICLKTV…DNPIPGERVI (106 aa).

This sequence belongs to the class-I aminoacyl-tRNA synthetase family. MetG type 1 subfamily. In terms of assembly, homodimer. Zn(2+) is required as a cofactor.

It is found in the cytoplasm. It carries out the reaction tRNA(Met) + L-methionine + ATP = L-methionyl-tRNA(Met) + AMP + diphosphate. In terms of biological role, is required not only for elongation of protein synthesis but also for the initiation of all mRNA translation through initiator tRNA(fMet) aminoacylation. The chain is Methionine--tRNA ligase from Borrelia duttonii (strain Ly).